A 371-amino-acid chain; its full sequence is Phosphatase IMPL1, chloroplastic (371 aa).

The N-terminal 60 residues, 1 to 60 (MGRSLIFSGNMSLRISHLPRSSLPLQNPISGRTVNRTFRYRCTRILSNSFKSTTRLQTKA), are a transit peptide targeting the chloroplast. Position 61 is an N-acetylvaline (valine 61). Positions 148, 165, 167, and 168 each coordinate Mg(2+). Residue glutamate 148 coordinates substrate. Substrate is bound by residues 167–170 (LDGT), 273–275 (GAA), glutamate 292, and aspartate 299. Aspartate 299 is a Mg(2+) binding site.

This sequence belongs to the inositol monophosphatase superfamily. The cofactor is Mg(2+). As to expression, ubiquitous. Expressed in pistil and seed endosperm.

The protein localises to the plastid. The protein resides in the chloroplast stroma. The enzyme catalyses a myo-inositol phosphate + H2O = myo-inositol + phosphate. It functions in the pathway polyol metabolism; myo-inositol biosynthesis; myo-inositol from D-glucose 6-phosphate: step 2/2. In terms of biological role, phosphatase acting preferentially on D-myoinositol 1-phosphate (D-Ins 1-P). In Arabidopsis thaliana (Mouse-ear cress), this protein is Phosphatase IMPL1, chloroplastic (IMPL1).